Reading from the N-terminus, the 376-residue chain is Queuine tRNA-ribosyltransferase (376 aa).

Asp93 acts as the Proton acceptor in catalysis. Substrate contacts are provided by residues 93–97 (DSGGF), Asp147, Gln190, and Gly217. Positions 248-254 (GVGKPGD) are RNA binding. The Nucleophile role is filled by Asp267. Residues Cys305, Cys307, Cys310, and His336 each coordinate Zn(2+).

Belongs to the queuine tRNA-ribosyltransferase family. In terms of assembly, homodimer. Within each dimer, one monomer is responsible for RNA recognition and catalysis, while the other monomer binds to the replacement base PreQ1. Requires Zn(2+) as cofactor.

The enzyme catalyses 7-aminomethyl-7-carbaguanine + guanosine(34) in tRNA = 7-aminomethyl-7-carbaguanosine(34) in tRNA + guanine. Its pathway is tRNA modification; tRNA-queuosine biosynthesis. Its function is as follows. Catalyzes the base-exchange of a guanine (G) residue with the queuine precursor 7-aminomethyl-7-deazaguanine (PreQ1) at position 34 (anticodon wobble position) in tRNAs with GU(N) anticodons (tRNA-Asp, -Asn, -His and -Tyr). Catalysis occurs through a double-displacement mechanism. The nucleophile active site attacks the C1' of nucleotide 34 to detach the guanine base from the RNA, forming a covalent enzyme-RNA intermediate. The proton acceptor active site deprotonates the incoming PreQ1, allowing a nucleophilic attack on the C1' of the ribose to form the product. After dissociation, two additional enzymatic reactions on the tRNA convert PreQ1 to queuine (Q), resulting in the hypermodified nucleoside queuosine (7-(((4,5-cis-dihydroxy-2-cyclopenten-1-yl)amino)methyl)-7-deazaguanosine). The sequence is that of Queuine tRNA-ribosyltransferase from Dinoroseobacter shibae (strain DSM 16493 / NCIMB 14021 / DFL 12).